Here is a 339-residue protein sequence, read N- to C-terminus: Anthranilate phosphoribosyltransferase (339 aa).

5-phospho-alpha-D-ribose 1-diphosphate contacts are provided by residues G81, 84 to 85 (GD), T89, 91 to 94 (NIST), 109 to 117 (KHGNRNLSS), and T121. G81 lines the anthranilate pocket. S93 serves as a coordination point for Mg(2+). N112 contacts anthranilate. R167 is an anthranilate binding site. 2 residues coordinate Mg(2+): D226 and E227.

The protein belongs to the anthranilate phosphoribosyltransferase family. Homodimer. The cofactor is Mg(2+).

The catalysed reaction is N-(5-phospho-beta-D-ribosyl)anthranilate + diphosphate = 5-phospho-alpha-D-ribose 1-diphosphate + anthranilate. It participates in amino-acid biosynthesis; L-tryptophan biosynthesis; L-tryptophan from chorismate: step 2/5. Catalyzes the transfer of the phosphoribosyl group of 5-phosphorylribose-1-pyrophosphate (PRPP) to anthranilate to yield N-(5'-phosphoribosyl)-anthranilate (PRA). The protein is Anthranilate phosphoribosyltransferase of Ruegeria pomeroyi (strain ATCC 700808 / DSM 15171 / DSS-3) (Silicibacter pomeroyi).